Reading from the N-terminus, the 944-residue chain is Protein translocase subunit SecA (944 aa).

Residues glutamine 87, 105 to 109 (GEGKT), and aspartate 494 each bind ATP. A disordered region spans residues 894-944 (HAAAAGDGEEKPRPKQETVVRTQPKVGRNDPCPCGSGKKYKKCHGATEAAV). Over residues 901-911 (GEEKPRPKQET) the composition is skewed to basic and acidic residues. Cysteine 925, cysteine 927, cysteine 936, and histidine 937 together coordinate Zn(2+).

Belongs to the SecA family. In terms of assembly, monomer and homodimer. Part of the essential Sec protein translocation apparatus which comprises SecA, SecYEG and auxiliary proteins SecDF-YajC and YidC. Zn(2+) is required as a cofactor.

The protein resides in the cell inner membrane. Its subcellular location is the cytoplasm. It catalyses the reaction ATP + H2O + cellular proteinSide 1 = ADP + phosphate + cellular proteinSide 2.. In terms of biological role, part of the Sec protein translocase complex. Interacts with the SecYEG preprotein conducting channel. Has a central role in coupling the hydrolysis of ATP to the transfer of proteins into and across the cell membrane, serving as an ATP-driven molecular motor driving the stepwise translocation of polypeptide chains across the membrane. The sequence is that of Protein translocase subunit SecA from Anaeromyxobacter sp. (strain Fw109-5).